Consider the following 695-residue polypeptide: ATP-dependent DNA helicase II subunit 2 (695 aa).

Residues 229 to 461 (FSIGNRDSKD…IDFAVSNYID (233 aa)) form the Ku domain.

This sequence belongs to the ku80 family. Heterodimer of pku70 and pku80.

The protein localises to the nucleus. It is found in the chromosome. The protein resides in the telomere. It carries out the reaction ATP + H2O = ADP + phosphate + H(+). Functionally, single-stranded DNA-dependent ATP-dependent helicase. Involved in non-homologous end joining (NHEJ) DNA double strand break repair. DNA-binding is sequence-independent but has a high affinity to nicks in double-stranded DNA and to the ends of duplex DNA. Binds to naturally occurring chromosomal ends, and therefore provides chromosomal end protection. Required also for telomere recombination to repair telomeric ends in the absence of telomerase. ku70, of the ku70/ku80 heterodimer, binds to the stem loop of tlc1, the RNA component of telomerase. Involved in telomere maintenance. Interacts with telomeric repeats and subtelomeric sequences thereby controlling telomere length and protecting against subtelomeric rearrangement. Required for mating-type switching. The polypeptide is ATP-dependent DNA helicase II subunit 2 (pku80) (Schizosaccharomyces pombe (strain 972 / ATCC 24843) (Fission yeast)).